A 428-amino-acid polypeptide reads, in one-letter code: Glutamate-1-semialdehyde 2,1-aminomutase 1 (428 aa).

Lys267 bears the N6-(pyridoxal phosphate)lysine mark.

Belongs to the class-III pyridoxal-phosphate-dependent aminotransferase family. HemL subfamily. Homodimer. Pyridoxal 5'-phosphate serves as cofactor.

It is found in the cytoplasm. It catalyses the reaction (S)-4-amino-5-oxopentanoate = 5-aminolevulinate. Its pathway is porphyrin-containing compound metabolism; protoporphyrin-IX biosynthesis; 5-aminolevulinate from L-glutamyl-tRNA(Glu): step 2/2. This Staphylococcus aureus (strain Mu3 / ATCC 700698) protein is Glutamate-1-semialdehyde 2,1-aminomutase 1.